The sequence spans 335 residues: Large ribosomal subunit protein uL3 (335 aa).

The interval 1–20 (MATIHRPRRGSLAFSPRKRA) is disordered.

The protein belongs to the universal ribosomal protein uL3 family. As to quaternary structure, part of the 50S ribosomal subunit. Forms a cluster with proteins L14 and L24e.

One of the primary rRNA binding proteins, it binds directly near the 3'-end of the 23S rRNA, where it nucleates assembly of the 50S subunit. The protein is Large ribosomal subunit protein uL3 of Methanothrix thermoacetophila (strain DSM 6194 / JCM 14653 / NBRC 101360 / PT) (Methanosaeta thermophila).